A 529-amino-acid polypeptide reads, in one-letter code: MQNLVKEFIEKVLETNIVLEKPKDVSLGHYATPVAFSLAKELKKSPMLIAQELVTKLENPSLFEKIEAVNGFINFKLSPLFLQSLVDDALSNKENFAKQHKKSEKILLEYVSANPTGPLHIGHARGAIFGDSLARVGKYLGYDITTEYYINDAGSQMDLLGLSVNLAARDFIYGEDVSYPEVYYRGDYLIDIANQIIQDYGKDYLYDEKNFKDIALLGKDFVMNLIIKDLKDLGIEFDNFVSEKSLYSSWNETKRVLEENGSLYDKDDKTYLKSTQYGDDSDRVVVRDNGIPTYLAGDIIYHKNKYDRNFDRYINIWGADHHGYITRVKAAIEFLGNDSSKLEVLLSQMVQLLKGGEPYKMSKRKGNVILMSEITEEIGSDALRFIFLTKKSDTHLEFDIDTLKNQDSSNPIFYINYAHARINQVFVKAGVNFDDIKDISFEKLNQDGLNLVYESLLLESILVEAFAKRDMQKITEYLYNLASSIHKFYNEHKIIGSDEQNLYLKVLSIAALSIKVGLKLLGIEAKEIM.

The 'HIGH' region signature appears at 113-123; it reads ANPTGPLHIGH.

The protein belongs to the class-I aminoacyl-tRNA synthetase family. Monomer.

Its subcellular location is the cytoplasm. The enzyme catalyses tRNA(Arg) + L-arginine + ATP = L-arginyl-tRNA(Arg) + AMP + diphosphate. In Aliarcobacter butzleri (strain RM4018) (Arcobacter butzleri), this protein is Arginine--tRNA ligase.